Here is a 504-residue protein sequence, read N- to C-terminus: D-alanine--D-alanyl carrier protein ligase (504 aa).

ATP is bound at residue 152–153 (TS). Residue aspartate 197 participates in D-alanine binding. 292–297 (NTYGPT) provides a ligand contact to ATP. A D-alanine-binding site is contributed by valine 301. ATP is bound by residues aspartate 383, 394–397 (YNGR), and lysine 492. Lysine 492 is a binding site for D-alanine.

The protein belongs to the ATP-dependent AMP-binding enzyme family. DltA subfamily.

The protein resides in the cytoplasm. It carries out the reaction holo-[D-alanyl-carrier protein] + D-alanine + ATP = D-alanyl-[D-alanyl-carrier protein] + AMP + diphosphate. It participates in cell wall biogenesis; lipoteichoic acid biosynthesis. Functionally, catalyzes the first step in the D-alanylation of lipoteichoic acid (LTA), the activation of D-alanine and its transfer onto the D-alanyl carrier protein (Dcp) DltC. In an ATP-dependent two-step reaction, forms a high energy D-alanyl-AMP intermediate, followed by transfer of the D-alanyl residue as a thiol ester to the phosphopantheinyl prosthetic group of the Dcp. D-alanylation of LTA plays an important role in modulating the properties of the cell wall in Gram-positive bacteria, influencing the net charge of the cell wall. The sequence is that of D-alanine--D-alanyl carrier protein ligase from Bacillus cereus (strain G9842).